A 1597-amino-acid chain; its full sequence is Rho guanine nucleotide exchange factor 5 (1597 aa).

Disordered regions lie at residues 138 to 246 (PFSS…EGTL), 258 to 455 (EEQM…SLEP), and 467 to 1072 (GSFL…VFRE). The residue at position 184 (S184) is a Phosphoserine. The span at 192–204 (ETNQNEGSESGTI) shows a compositional bias: polar residues. The segment covering 217 to 237 (ESQGLLHPQEVQVLEEQGQQE) has biased composition (low complexity). Positions 266–278 (NDEKGEQKQKQEQ) are enriched in basic and acidic residues. Over residues 299 to 309 (GLNDGEWEQED) the composition is skewed to acidic residues. Basic and acidic residues-rich tracts occupy residues 323–368 (GEER…KEKG) and 394–404 (RSREEENEHHG). The span at 428-438 (LMTQIPGTQTE) shows a compositional bias: polar residues. A phosphoserine mark is found at S445 and S450. Over residues 474-490 (SPDKEIDQNSQQEESRL) the composition is skewed to basic and acidic residues. A compositionally biased stretch (pro residues) spans 512-522 (PRTPDSAPPSP). Polar residues-rich tracts occupy residues 583-601 (STGTSPPRPPANSTGTVQH) and 655-682 (DYSTVSASPTALSTLKQDSQESISNLER). Residues 731–746 (QRRDTHPSVVETDGHA) show a composition bias toward basic and acidic residues. 2 stretches are compositionally biased toward pro residues: residues 812-828 (PLPPTPDLPQPHLPPIS) and 838-856 (PLPPLPIIDPPTEPPPLPP). An Asymmetric dimethylarginine modification is found at R866. Over residues 901–920 (ATARSTESFTSTSRSKSEVS) the composition is skewed to low complexity. A compositionally biased stretch (polar residues) spans 926-941 (SNMTNFLCPSSPTTPW). Positions 950–969 (SKDEAGVSEHPEAPAREPLR) are enriched in basic and acidic residues. A phosphoserine mark is found at S983, S1011, and S1044. Residues 990–1012 (QPEKPSHLHLEKASSWPHRRDSG) show a composition bias toward basic and acidic residues. The segment covering 1057-1072 (AVEKHPGPSDTVVFRE) has biased composition (basic and acidic residues). S1126 carries the phosphoserine modification. The region spanning 1174–1358 (KLQEVKFELI…EQLIRDCNNN (185 aa)) is the DH domain. The region spanning 1390-1502 (WLVKSGELTA…WISALAMPRE (113 aa)) is the PH domain. The SH3 domain occupies 1510–1571 (YNSPQVQCLR…PVQQVEFISN (62 aa)).

In terms of assembly, interacts with SRC. Forms a ternary complex with SRC and the PI3K 85 kDa subunit. Interacts with and is activated by the heterodimer formed by GNB1 and GNG2. Interacts with ODAM (via C-terminus). Interacts with RHOA. In terms of processing, activation of SRC induces tyrosine phosphorylation of ARHGEF5. Ubiquitously expressed with highest levels in placenta. High levels are also found in colon, kidney, trachea, prostate, liver, pancreas, pituitary gland, thyroid gland and mammary gland. In fetal tissues, expressed at high levels in kidney, lung and liver. Expressed at low levels in lung and heart.

It is found in the cytoplasm. The protein localises to the nucleus. It localises to the cell projection. Its subcellular location is the podosome. Its function is as follows. Guanine nucleotide exchange factor which activates Rho GTPases. Strongly activates RHOA. Also strongly activates RHOB, weakly activates RHOC and RHOG and shows no effect on RHOD, RHOV, RHOQ or RAC1. Involved in regulation of cell shape and actin cytoskeletal organization. Plays a role in actin organization by generating a loss of actin stress fibers and the formation of membrane ruffles and filopodia. Required for SRC-induced podosome formation. Involved in positive regulation of immature dendritic cell migration. The protein is Rho guanine nucleotide exchange factor 5 (ARHGEF5) of Homo sapiens (Human).